The chain runs to 237 residues: MSNLRTLVFFATPPHDCSYLPDREATTMFVDPRAHIDKKLYSQLTALGFRRSGSHYYRPHCESCNACVPVRLQVGQFEPDRNQRRVLRKNADLDCKLVPAAFSERYYRLYAHYIEERHRDGDMYPPSREQFTSFLVEGATDSWFLEMSLDGELVGLAAVDLLDDGLSAIYTVFAPELEHRSLGTFAVLWQIEEAKRRELPHLYLGYWIKECRKMNYKTRFQPIEALRDGHWREMSTD.

Belongs to the R-transferase family. Bpt subfamily.

The protein resides in the cytoplasm. The catalysed reaction is N-terminal L-glutamyl-[protein] + L-leucyl-tRNA(Leu) = N-terminal L-leucyl-L-glutamyl-[protein] + tRNA(Leu) + H(+). It catalyses the reaction N-terminal L-aspartyl-[protein] + L-leucyl-tRNA(Leu) = N-terminal L-leucyl-L-aspartyl-[protein] + tRNA(Leu) + H(+). Functionally, functions in the N-end rule pathway of protein degradation where it conjugates Leu from its aminoacyl-tRNA to the N-termini of proteins containing an N-terminal aspartate or glutamate. The sequence is that of Aspartate/glutamate leucyltransferase from Marinobacter nauticus (strain ATCC 700491 / DSM 11845 / VT8) (Marinobacter aquaeolei).